The following is a 950-amino-acid chain: F-box only protein 10 (950 aa).

Residues 1–48 (METGGLPLELWRMILAYLHLPDLGRCSLVCRAWYELILSLDSTRWRQL) enclose the F-box domain. 2 PbH1 repeats span residues 198 to 217 (SGHI…QVHG) and 238 to 260 (VPLC…TVEG). The tract at residues 313-364 (IEGSQSPTSPVCSSPKPGSKEAEVGSDGERVAQTPDSSDGGLSPSGEDEDDE) is disordered. Residues 315-324 (GSQSPTSPVC) are compositionally biased toward polar residues. Residues S321 and S326 each carry the phosphoserine modification. Positions 330-342 (GSKEAEVGSDGER) are enriched in basic and acidic residues. Over residues 347–357 (PDSSDGGLSPS) the composition is skewed to low complexity. 15 PbH1 repeats span residues 423–444 (VQGC…FVCS), 467–489 (NSKI…FLRL), 490–512 (EGGG…DIRK), 513–535 (KSNP…VVLG), 536–558 (NGKG…YILY), 559–581 (HGNP…AVNE), 582–604 (NGKG…DIRR), 605–627 (GGVP…VVGD), 628–650 (EGKG…WMMS), 651–673 (SSLP…AVFS), 713–735 (ITVA…FVQS), 736–758 (SEAL…TIVQ), 760–782 (SQLT…KVEF), 783–805 (QCKV…ITKG), and 828–850 (RSDT…AVRG).

Component of the SCF(FBXO10) complex consisting of CUL1, SKP1 and FBXO10. Interacts with BCL2. Interacts with PRDM1. As to expression, particularly highly expressed in B-cells.

The protein localises to the cytoplasm. Its pathway is protein modification; protein ubiquitination. Functionally, substrate-recognition component of the SCF (SKP1-CUL1-F-box protein)-type E3 ubiquitin ligase complex. Mediates the ubiquitination and degradation of BCL2, an antiapoptotic protein, thereby playing a role in apoptosis by controlling the stability of BCL2. Targets also the receptor for advanced glycation end products RAGE for ubiquitination and subsequent lysosomal degradation. Directly controls HGAL/GCSAM ubiquitination and degradation and thereby decreases BCR signaling. The protein is F-box only protein 10 (Fbxo10) of Mus musculus (Mouse).